Here is a 249-residue protein sequence, read N- to C-terminus: Carboxy-S-adenosyl-L-methionine synthase (249 aa).

S-adenosyl-L-methionine is bound by residues Tyr39, 64 to 66, 117 to 118, Asn132, and Arg199; these read GCS and DI.

This sequence belongs to the class I-like SAM-binding methyltransferase superfamily. Cx-SAM synthase family. As to quaternary structure, homodimer.

It catalyses the reaction prephenate + S-adenosyl-L-methionine = carboxy-S-adenosyl-L-methionine + 3-phenylpyruvate + H2O. In terms of biological role, catalyzes the conversion of S-adenosyl-L-methionine (SAM) to carboxy-S-adenosyl-L-methionine (Cx-SAM). This is Carboxy-S-adenosyl-L-methionine synthase from Aeromonas hydrophila subsp. hydrophila (strain ATCC 7966 / DSM 30187 / BCRC 13018 / CCUG 14551 / JCM 1027 / KCTC 2358 / NCIMB 9240 / NCTC 8049).